A 444-amino-acid chain; its full sequence is ATP-dependent protease ATPase subunit HslU (444 aa).

Residues Ile20 and 62 to 67 (GVGKTE) each bind ATP. The interval 130-158 (EDRILDALVPPPRGASGEPERGEDNSARQ) is disordered. ATP is bound by residues Asp257, Glu322, and Arg394.

Belongs to the ClpX chaperone family. HslU subfamily. In terms of assembly, a double ring-shaped homohexamer of HslV is capped on each side by a ring-shaped HslU homohexamer. The assembly of the HslU/HslV complex is dependent on binding of ATP.

The protein localises to the cytoplasm. Its function is as follows. ATPase subunit of a proteasome-like degradation complex; this subunit has chaperone activity. The binding of ATP and its subsequent hydrolysis by HslU are essential for unfolding of protein substrates subsequently hydrolyzed by HslV. HslU recognizes the N-terminal part of its protein substrates and unfolds these before they are guided to HslV for hydrolysis. The sequence is that of ATP-dependent protease ATPase subunit HslU from Bordetella bronchiseptica (strain ATCC BAA-588 / NCTC 13252 / RB50) (Alcaligenes bronchisepticus).